The sequence spans 583 residues: Fumarate reductase flavoprotein subunit (583 aa).

FAD-binding positions include 11–15 (GGGGA), 35–37 (VSK), 43–51 (SHTVSAEGG), 155–157 (WFA), and Asp211. A Tele-8alpha-FAD histidine modification is found at His44. Catalysis depends on residues His232 and Arg248. FAD-binding positions include 353 to 354 (HY), Glu377, and 388 to 394 (RLGSNSL).

The protein belongs to the FAD-dependent oxidoreductase 2 family. FRD/SDH subfamily. As to quaternary structure, part of an enzyme complex containing four subunits: a flavoprotein (FrdA), an iron-sulfur protein (FrdB), and two hydrophobic anchor proteins (FrdC and FrdD). Requires FAD as cofactor.

It localises to the cell membrane. The catalysed reaction is a quinone + succinate = fumarate + a quinol. It catalyses the reaction a menaquinone + succinate = a menaquinol + fumarate. The chain is Fumarate reductase flavoprotein subunit (frdA) from Mycobacterium tuberculosis (strain CDC 1551 / Oshkosh).